The following is a 340-amino-acid chain: DNA-directed RNA polymerase subunit alpha (340 aa).

The alpha N-terminal domain (alpha-NTD) stretch occupies residues M1 to E233. The segment at A264 to S340 is alpha C-terminal domain (alpha-CTD).

The protein belongs to the RNA polymerase alpha chain family. As to quaternary structure, in plastids the minimal PEP RNA polymerase catalytic core is composed of four subunits: alpha, beta, beta', and beta''. When a (nuclear-encoded) sigma factor is associated with the core the holoenzyme is formed, which can initiate transcription.

Its subcellular location is the plastid. It localises to the chloroplast. The enzyme catalyses RNA(n) + a ribonucleoside 5'-triphosphate = RNA(n+1) + diphosphate. Its function is as follows. DNA-dependent RNA polymerase catalyzes the transcription of DNA into RNA using the four ribonucleoside triphosphates as substrates. The polypeptide is DNA-directed RNA polymerase subunit alpha (Psilotum nudum (Whisk fern)).